The primary structure comprises 159 residues: Ribosomal RNA large subunit methyltransferase H (159 aa).

The S-adenosyl-L-methionine site is built by L76 and G108.

It belongs to the RNA methyltransferase RlmH family. As to quaternary structure, homodimer.

The protein localises to the cytoplasm. It carries out the reaction pseudouridine(1915) in 23S rRNA + S-adenosyl-L-methionine = N(3)-methylpseudouridine(1915) in 23S rRNA + S-adenosyl-L-homocysteine + H(+). Functionally, specifically methylates the pseudouridine at position 1915 (m3Psi1915) in 23S rRNA. The protein is Ribosomal RNA large subunit methyltransferase H of Limosilactobacillus reuteri (strain DSM 20016) (Lactobacillus reuteri).